The following is a 418-amino-acid chain: Voltage-gated ClC-type chloride channel ClcB (418 aa).

10 helical membrane-spanning segments follow: residues leucine 5–alanine 25, leucine 54–phenylalanine 74, leucine 146–glycine 166, leucine 168–isoleucine 188, alanine 222–methionine 242, tryptophan 258–tryptophan 278, alanine 291–alanine 311, glycine 316–tyrosine 336, leucine 352–methionine 372, and methionine 380–isoleucine 400.

The protein belongs to the chloride channel (TC 2.A.49) family. ClcB subfamily.

The protein localises to the cell inner membrane. In terms of biological role, probably acts as an electrical shunt for an outwardly-directed proton pump that is linked to amino acid decarboxylation, as part of the extreme acid resistance (XAR) response. This is Voltage-gated ClC-type chloride channel ClcB from Escherichia coli (strain ATCC 8739 / DSM 1576 / NBRC 3972 / NCIMB 8545 / WDCM 00012 / Crooks).